A 292-amino-acid chain; its full sequence is N-acetylneuraminate lyase (292 aa).

Aceneuramate contacts are provided by serine 47 and threonine 48. Tyrosine 136 serves as the catalytic Proton donor. Residue lysine 164 is the Schiff-base intermediate with substrate of the active site. Aceneuramate contacts are provided by threonine 166, glycine 188, aspartate 190, glutamate 191, and serine 207.

The protein belongs to the DapA family. NanA subfamily. Homotetramer.

Its subcellular location is the cytoplasm. The catalysed reaction is aceneuramate = aldehydo-N-acetyl-D-mannosamine + pyruvate. It participates in amino-sugar metabolism; N-acetylneuraminate degradation; D-fructose 6-phosphate from N-acetylneuraminate: step 1/5. Its function is as follows. Catalyzes the reversible aldol cleavage of N-acetylneuraminic acid (sialic acid; Neu5Ac) to form pyruvate and N-acetylmannosamine (ManNAc) via a Schiff base intermediate. This chain is N-acetylneuraminate lyase, found in Actinobacillus pleuropneumoniae serotype 3 (strain JL03).